Here is a 117-residue protein sequence, read N- to C-terminus: Ig heavy chain V region MOPC 173 (117 aa).

The Ig-like domain maps to glutamate 1–serine 116. A disulfide bridge links cysteine 22 with cysteine 96.

The sequence is that of Ig heavy chain V region MOPC 173 from Mus musculus (Mouse).